A 486-amino-acid polypeptide reads, in one-letter code: MATFKDACYHYKRINKLNQTVLKLGVNDTWRPSPPTKYKGWCLDCCQHTDLTYCRGCTIYHVCQWCSQYGRCFLDDEPHLLRMRTFKNEVTKDNLKNLIDMYNTLFPITQKIIHRFINNTRQHKCRNECMTQWYNHLLMPITLQSLSIELDGDVYYIFGYYDSMNNINQTPFSFTNLVDIYDKLLLDDVNFVRMSFLPTSLQREYALRYFSKSRFISEQRKCVNDSHFSINVLENLYNPNFKVQITRNCSELSVDWNEACKLVKNVSAYFDILKTSHVEFYSVSTRCRIFTRCKLEMASKLIKPNYVTSNHKTLATEVRNCKWCSINNSYTVWNDFRIKKIYNNIFSFLRALVKSNVNIGHCSSQEKIYEYVENVLNVCDDKRWKTSIMEIFNCLEPVELNDVKYVLFNYEINWDVINVLIHSIGKVPQILTLENVITIIQSIVYEWFDITYMRNTPMVTFTIDKLRRLHIGLKTVDSDSGISDVE.

The tract at residues Met1–Leu81 is RNA-binding. Positions Cys42 to His79 are zinc-binding domain. Positions Arg82 to Asn176 are important for cytoskeleton localization. The tract at residues Glu317–Glu486 is interaction with host IRF3. The IKBKB-like degron (ILD) motif motif lies at Asp479 to Ser483. The pLxIS motif motif lies at Ser480 to Ser483.

It belongs to the rotavirus NSP1 family. Interacts (via C-terminus) with host IRF3; this interaction leads to IRF3 degradation. Interacts with host IRF7; this interaction leads to IRF7 degradation. Interacts with host CUL1 and CUL3. Interacts with host BTRC. In terms of processing, the C-terminal region is phosphorylated by host CKII/CSNK2A1. Phosphorylation of the DSGXS motif is essential for host NF-kappa-B inhibition.

Its subcellular location is the host cytoplasm. It is found in the host cytoskeleton. Functionally, plays a role in the inhibition of host innate immunity by inducing the degradation of key host factors required to activate interferon production such as IRF3, IRF5 or IRF7. Associates with components of cullin RING ligases (CRLs) including CUL1 or CUL3, which are essential multisubunit ubiquitination complexes, to modulate their activities. Recognizes the host NF-kappa-B regulator BTRC through the presence of a DSGXS motif in the C-terminal substrate recognition domain. The chain is Non-structural protein 1 from Rotavirus A (isolate RVA/Human/India/116E/1986/G9P8[11]) (RV-A).